We begin with the raw amino-acid sequence, 385 residues long: MGSHQERPLIGLLFSETGVTADIERSQRYGALLAVEQLNREGGVGGRPIETLSQDPGGDPDRYRLCAEDFIRNRGVRFLVGCYMSHTRKAVMPVVERADALLCYPTPYEGFEYSPNIVYGGPAPNQNSAPLAAYLIRHYGERVVFIGSDYIYPRESNHVMRHLYRQHGGTVLEEIYIPLYPSDDDVQRAVERIYQARADVVFSTVVGTGTAELYRAIARRYGDGRRPPIASLTTSEAEVAKMESDVAEGQVVVAPYFSSIDTAASRAFVQACHGFFPENATITAWAEAAYWQTLLLGRAAQAAGSWRVEDVQRHLYDICIDAPQGPVRVERQNNHSRLSSRIAEIDARGVFQVRWQSPEPIRPDPYVVVHNLDDWSASMGGGALP.

Homodimer. Forms a complex with AmiR.

Its function is as follows. Negatively regulates the expression of the aliphatic amidase operon. AmiC functions by inhibiting the action of AmiR at the protein level. It exhibits protein kinase activity. This Pseudomonas aeruginosa (strain ATCC 15692 / DSM 22644 / CIP 104116 / JCM 14847 / LMG 12228 / 1C / PRS 101 / PAO1) protein is Aliphatic amidase expression-regulating protein (amiC).